The following is a 446-amino-acid chain: Putative ankyrin repeat protein L273 (446 aa).

6 ANK repeats span residues 71 to 100 (NGEF…KSNM), 124 to 153 (DHNK…RMRP), 206 to 237 (TDIE…KILM), 245 to 277 (VWVS…KMHV), 303 to 332 (ELEY…NSYY), and 365 to 394 (YTDI…QQII).

This is Putative ankyrin repeat protein L273 from Acanthamoeba polyphaga (Amoeba).